Reading from the N-terminus, the 166-residue chain is Endoribonuclease YbeY (166 aa).

Zn(2+) contacts are provided by His132, His136, and His142.

It belongs to the endoribonuclease YbeY family. Zn(2+) serves as cofactor.

Its subcellular location is the cytoplasm. Functionally, single strand-specific metallo-endoribonuclease involved in late-stage 70S ribosome quality control and in maturation of the 3' terminus of the 16S rRNA. The sequence is that of Endoribonuclease YbeY from Clostridium botulinum (strain Eklund 17B / Type B).